The sequence spans 266 residues: Small ribosomal subunit protein eS1 (266 aa).

Residues Asp237–Val266 form a disordered region.

It belongs to the eukaryotic ribosomal protein eS1 family. Component of the small ribosomal subunit. Mature ribosomes consist of a small (40S) and a large (60S) subunit. The 40S subunit contains about 33 different proteins and 1 molecule of RNA (18S). The 60S subunit contains about 49 different proteins and 3 molecules of RNA (28S, 5.8S and 5S).

The protein localises to the cytoplasm. The protein is Small ribosomal subunit protein eS1 of Lysiphlebus testaceipes (Greenbugs aphid parastoid).